The following is a 123-amino-acid chain: PTS system glucitol/sorbitol-specific EIIA component (123 aa).

The region spanning 3–116 (VIYQTTITRI…PDDIAPGSVL (114 aa)) is the PTS EIIA type-5 domain. Residue His-43 is the Tele-phosphohistidine intermediate of the active site. His-43 carries the post-translational modification Phosphohistidine; by HPr.

The protein resides in the cytoplasm. Functionally, the phosphoenolpyruvate-dependent sugar phosphotransferase system (sugar PTS), a major carbohydrate active transport system, catalyzes the phosphorylation of incoming sugar substrates concomitantly with their translocation across the cell membrane. The enzyme II complex composed of SrlA, SrlB and SrlE is involved in glucitol/sorbitol transport. It can also use D-mannitol. The chain is PTS system glucitol/sorbitol-specific EIIA component (srlB) from Escherichia coli (strain K12).